A 146-amino-acid polypeptide reads, in one-letter code: Cytochrome c oxidase subunit 5A, mitochondrial (146 aa).

A mitochondrion-targeting transit peptide spans 1–37 (MLAAALRRCTAAAAARGLLHPASAPSPAAAVCSIRCY). The short motif at 2–16 (LAAALRRCTAAAAAR) is the SIFI-degron element. N6-acetyllysine occurs at positions 83 and 109. Phosphothreonine is present on Thr-137.

It belongs to the cytochrome c oxidase subunit 5A family. In terms of assembly, component of the cytochrome c oxidase (complex IV, CIV), a multisubunit enzyme composed of 14 subunits. The complex is composed of a catalytic core of 3 subunits MT-CO1, MT-CO2 and MT-CO3, encoded in the mitochondrial DNA, and 11 supernumerary subunits COX4I, COX5A, COX5B, COX6A, COX6B, COX6C, COX7A, COX7B, COX7C, COX8 and NDUFA4, which are encoded in the nuclear genome. The complex exists as a monomer or a dimer and forms supercomplexes (SCs) in the inner mitochondrial membrane with NADH-ubiquinone oxidoreductase (complex I, CI) and ubiquinol-cytochrome c oxidoreductase (cytochrome b-c1 complex, complex III, CIII), resulting in different assemblies (supercomplex SCI(1)III(2)IV(1) and megacomplex MCI(2)III(2)IV(2)). Interacts with AFG1L. Interacts with RAB5IF. Post-translationally, in response to mitochondrial stress, the precursor protein is ubiquitinated by the SIFI complex in the cytoplasm before mitochondrial import, leading to its degradation. Within the SIFI complex, UBR4 initiates ubiquitin chain that are further elongated or branched by KCMF1.

The protein resides in the mitochondrion inner membrane. The protein operates within energy metabolism; oxidative phosphorylation. In terms of biological role, component of the cytochrome c oxidase, the last enzyme in the mitochondrial electron transport chain which drives oxidative phosphorylation. The respiratory chain contains 3 multisubunit complexes succinate dehydrogenase (complex II, CII), ubiquinol-cytochrome c oxidoreductase (cytochrome b-c1 complex, complex III, CIII) and cytochrome c oxidase (complex IV, CIV), that cooperate to transfer electrons derived from NADH and succinate to molecular oxygen, creating an electrochemical gradient over the inner membrane that drives transmembrane transport and the ATP synthase. Cytochrome c oxidase is the component of the respiratory chain that catalyzes the reduction of oxygen to water. Electrons originating from reduced cytochrome c in the intermembrane space (IMS) are transferred via the dinuclear copper A center (CU(A)) of subunit 2 and heme A of subunit 1 to the active site in subunit 1, a binuclear center (BNC) formed by heme A3 and copper B (CU(B)). The BNC reduces molecular oxygen to 2 water molecules using 4 electrons from cytochrome c in the IMS and 4 protons from the mitochondrial matrix. The sequence is that of Cytochrome c oxidase subunit 5A, mitochondrial (Cox5a) from Mus musculus (Mouse).